Consider the following 298-residue polypeptide: 33 kDa chaperonin (298 aa).

2 disulfides stabilise this stretch: C237–C239 and C270–C273.

The protein belongs to the HSP33 family. Post-translationally, under oxidizing conditions two disulfide bonds are formed involving the reactive cysteines. Under reducing conditions zinc is bound to the reactive cysteines and the protein is inactive.

It is found in the cytoplasm. Its function is as follows. Redox regulated molecular chaperone. Protects both thermally unfolding and oxidatively damaged proteins from irreversible aggregation. Plays an important role in the bacterial defense system toward oxidative stress. This Enterococcus faecalis (strain ATCC 700802 / V583) protein is 33 kDa chaperonin.